We begin with the raw amino-acid sequence, 98 residues long: MPIIYMNITLAFIISLLGMLVYRSHLMSSLLCLEGMMLSLFMMSTLMALNMHFPLANIMPIALLVFAACEAAVGLALLVSISNMYGLDHIHNLNLLQC.

3 helical membrane passes run 1-21 (MPII…GMLV), 29-49 (SLLC…LMAL), and 61-81 (IALL…LVSI).

The protein belongs to the complex I subunit 4L family. In terms of assembly, core subunit of respiratory chain NADH dehydrogenase (Complex I) which is composed of 45 different subunits.

It is found in the mitochondrion inner membrane. The catalysed reaction is a ubiquinone + NADH + 5 H(+)(in) = a ubiquinol + NAD(+) + 4 H(+)(out). Its function is as follows. Core subunit of the mitochondrial membrane respiratory chain NADH dehydrogenase (Complex I) which catalyzes electron transfer from NADH through the respiratory chain, using ubiquinone as an electron acceptor. Part of the enzyme membrane arm which is embedded in the lipid bilayer and involved in proton translocation. This Piliocolobus badius (Western red colobus) protein is NADH-ubiquinone oxidoreductase chain 4L (MT-ND4L).